Reading from the N-terminus, the 264-residue chain is Thymidylate synthase (264 aa).

Arg-21 is a dUMP binding site. (6R)-5,10-methylene-5,6,7,8-tetrahydrofolate is bound at residue His-51. Residue 126 to 127 (RR) coordinates dUMP. Catalysis depends on Cys-146, which acts as the Nucleophile. Residues 166-169 (RSAD), Asn-177, and 207-209 (HLY) each bind dUMP. Residue Asp-169 coordinates (6R)-5,10-methylene-5,6,7,8-tetrahydrofolate. Residue Ala-263 coordinates (6R)-5,10-methylene-5,6,7,8-tetrahydrofolate.

The protein belongs to the thymidylate synthase family. Bacterial-type ThyA subfamily. In terms of assembly, homodimer.

It localises to the cytoplasm. It catalyses the reaction dUMP + (6R)-5,10-methylene-5,6,7,8-tetrahydrofolate = 7,8-dihydrofolate + dTMP. It functions in the pathway pyrimidine metabolism; dTTP biosynthesis. Catalyzes the reductive methylation of 2'-deoxyuridine-5'-monophosphate (dUMP) to 2'-deoxythymidine-5'-monophosphate (dTMP) while utilizing 5,10-methylenetetrahydrofolate (mTHF) as the methyl donor and reductant in the reaction, yielding dihydrofolate (DHF) as a by-product. This enzymatic reaction provides an intracellular de novo source of dTMP, an essential precursor for DNA biosynthesis. This Dechloromonas aromatica (strain RCB) protein is Thymidylate synthase.